Here is a 354-residue protein sequence, read N- to C-terminus: 3-dehydroquinate synthase (354 aa).

Residues 66–71 (SGETSK), 100–104 (GATGD), 124–125 (TT), lysine 136, lysine 145, and 163–166 (FLET) each bind NAD(+). 3 residues coordinate Zn(2+): glutamate 178, histidine 242, and histidine 256.

This sequence belongs to the sugar phosphate cyclases superfamily. Dehydroquinate synthase family. The cofactor is NAD(+). Requires Co(2+) as cofactor. It depends on Zn(2+) as a cofactor.

The protein localises to the cytoplasm. It catalyses the reaction 7-phospho-2-dehydro-3-deoxy-D-arabino-heptonate = 3-dehydroquinate + phosphate. It participates in metabolic intermediate biosynthesis; chorismate biosynthesis; chorismate from D-erythrose 4-phosphate and phosphoenolpyruvate: step 2/7. Catalyzes the conversion of 3-deoxy-D-arabino-heptulosonate 7-phosphate (DAHP) to dehydroquinate (DHQ). This chain is 3-dehydroquinate synthase, found in Staphylococcus epidermidis (strain ATCC 35984 / DSM 28319 / BCRC 17069 / CCUG 31568 / BM 3577 / RP62A).